A 239-amino-acid chain; its full sequence is Ribonuclease PH (239 aa).

Phosphate is bound by residues Arg86 and 124–126 (GTR).

Belongs to the RNase PH family. In terms of assembly, homohexameric ring arranged as a trimer of dimers.

The enzyme catalyses tRNA(n+1) + phosphate = tRNA(n) + a ribonucleoside 5'-diphosphate. Phosphorolytic 3'-5' exoribonuclease that plays an important role in tRNA 3'-end maturation. Removes nucleotide residues following the 3'-CCA terminus of tRNAs; can also add nucleotides to the ends of RNA molecules by using nucleoside diphosphates as substrates, but this may not be physiologically important. Probably plays a role in initiation of 16S rRNA degradation (leading to ribosome degradation) during starvation. In Sinorhizobium medicae (strain WSM419) (Ensifer medicae), this protein is Ribonuclease PH.